A 548-amino-acid chain; its full sequence is Cytochrome P450 monooxygenase hepE (548 aa).

Heme is bound at residue C485.

This sequence belongs to the cytochrome P450 family. It depends on heme as a cofactor.

Its pathway is secondary metabolite biosynthesis. Its function is as follows. Cytochrome P450 monooxygenase; part of the gene cluster that mediates the biosynthesis of heptelidic acid (HA), a sesquiterpene lactone that acts as an inhibitor of glyceraldehyde-3-phosphatedehydrogenase (GAPDH) and a growth inhibitor of the salt-tolerant lactic acid bacteria in soy sauce brewing. This is Cytochrome P450 monooxygenase hepE from Aspergillus oryzae (strain ATCC 42149 / RIB 40) (Yellow koji mold).